The sequence spans 217 residues: LexA repressor (217 aa).

The H-T-H motif DNA-binding region spans 26-46 (FEEMKLALDLKSKSGIHRLIK). Active-site for autocatalytic cleavage activity residues include Ser138 and Lys176.

This sequence belongs to the peptidase S24 family. As to quaternary structure, homodimer.

The catalysed reaction is Hydrolysis of Ala-|-Gly bond in repressor LexA.. In terms of biological role, represses a number of genes involved in the response to DNA damage (SOS response), including recA and lexA. In the presence of single-stranded DNA, RecA interacts with LexA causing an autocatalytic cleavage which disrupts the DNA-binding part of LexA, leading to derepression of the SOS regulon and eventually DNA repair. This Zymomonas mobilis subsp. mobilis (strain ATCC 31821 / ZM4 / CP4) protein is LexA repressor.